The chain runs to 346 residues: GTP 3',8-cyclase (346 aa).

The Radical SAM core domain occupies 10-240 (QRSRPLRVLR…VTRIRARWPL (231 aa)). Arg-19 contacts GTP. [4Fe-4S] cluster-binding residues include Cys-26 and Cys-30. Tyr-32 contacts S-adenosyl-L-methionine. Cys-33 is a [4Fe-4S] cluster binding site. GTP is bound at residue Arg-65. Residue Gly-69 coordinates S-adenosyl-L-methionine. Thr-104 contacts GTP. An S-adenosyl-L-methionine-binding site is contributed by Ser-129. Lys-177 serves as a coordination point for GTP. Met-211 lines the S-adenosyl-L-methionine pocket. Positions 274 and 277 each coordinate [4Fe-4S] cluster. 279-281 (RLR) lines the GTP pocket. Cys-291 is a binding site for [4Fe-4S] cluster. The interval 326–346 (SDERQQTTGSMPHAEMAYLGG) is disordered.

This sequence belongs to the radical SAM superfamily. MoaA family. Monomer and homodimer. It depends on [4Fe-4S] cluster as a cofactor.

The enzyme catalyses GTP + AH2 + S-adenosyl-L-methionine = (8S)-3',8-cyclo-7,8-dihydroguanosine 5'-triphosphate + 5'-deoxyadenosine + L-methionine + A + H(+). The protein operates within cofactor biosynthesis; molybdopterin biosynthesis. In terms of biological role, catalyzes the cyclization of GTP to (8S)-3',8-cyclo-7,8-dihydroguanosine 5'-triphosphate. The chain is GTP 3',8-cyclase from Parasynechococcus marenigrum (strain WH8102).